We begin with the raw amino-acid sequence, 386 residues long: 1-deoxy-D-xylulose 5-phosphate reductoisomerase (386 aa).

NADPH-binding residues include Ser-10, Gly-11, Ser-12, Val-13, Asn-38, and Asn-120. Lys-121 lines the 1-deoxy-D-xylulose 5-phosphate pocket. Glu-122 provides a ligand contact to NADPH. Asp-146 is a Mn(2+) binding site. The 1-deoxy-D-xylulose 5-phosphate site is built by Ser-147, Glu-148, Ser-172, and His-195. Position 148 (Glu-148) interacts with Mn(2+). Gly-201 contacts NADPH. 1-deoxy-D-xylulose 5-phosphate contacts are provided by Ser-208, Asn-213, Lys-214, and Glu-217. Residue Glu-217 participates in Mn(2+) binding.

It belongs to the DXR family. Requires Mg(2+) as cofactor. It depends on Mn(2+) as a cofactor.

The enzyme catalyses 2-C-methyl-D-erythritol 4-phosphate + NADP(+) = 1-deoxy-D-xylulose 5-phosphate + NADPH + H(+). It functions in the pathway isoprenoid biosynthesis; isopentenyl diphosphate biosynthesis via DXP pathway; isopentenyl diphosphate from 1-deoxy-D-xylulose 5-phosphate: step 1/6. In terms of biological role, catalyzes the NADPH-dependent rearrangement and reduction of 1-deoxy-D-xylulose-5-phosphate (DXP) to 2-C-methyl-D-erythritol 4-phosphate (MEP). The chain is 1-deoxy-D-xylulose 5-phosphate reductoisomerase from Leptospira biflexa serovar Patoc (strain Patoc 1 / Ames).